We begin with the raw amino-acid sequence, 206 residues long: dTTP/UTP pyrophosphatase (206 aa).

Catalysis depends on Asp79, which acts as the Proton acceptor.

The protein belongs to the Maf family. YhdE subfamily. A divalent metal cation is required as a cofactor.

Its subcellular location is the cytoplasm. The catalysed reaction is dTTP + H2O = dTMP + diphosphate + H(+). The enzyme catalyses UTP + H2O = UMP + diphosphate + H(+). Nucleoside triphosphate pyrophosphatase that hydrolyzes dTTP and UTP. May have a dual role in cell division arrest and in preventing the incorporation of modified nucleotides into cellular nucleic acids. This Rhizobium meliloti (strain 1021) (Ensifer meliloti) protein is dTTP/UTP pyrophosphatase.